We begin with the raw amino-acid sequence, 475 residues long: Ribulose bisphosphate carboxylase large chain (475 aa).

A propeptide spanning residues 1–2 is cleaved from the precursor; sequence MS. N-acetylproline is present on proline 3. Lysine 14 is subject to N6,N6,N6-trimethyllysine. Substrate-binding residues include asparagine 123 and threonine 173. Lysine 175 (proton acceptor) is an active-site residue. Lysine 177 provides a ligand contact to substrate. Mg(2+)-binding residues include lysine 201, aspartate 203, and glutamate 204. The residue at position 201 (lysine 201) is an N6-carboxylysine. The active-site Proton acceptor is the histidine 294. Substrate contacts are provided by arginine 295, histidine 327, and serine 379.

Belongs to the RuBisCO large chain family. Type I subfamily. As to quaternary structure, heterohexadecamer of 8 large chains and 8 small chains; disulfide-linked. The disulfide link is formed within the large subunit homodimers. Mg(2+) is required as a cofactor. The disulfide bond which can form in the large chain dimeric partners within the hexadecamer appears to be associated with oxidative stress and protein turnover.

Its subcellular location is the plastid. The protein resides in the chloroplast. It carries out the reaction 2 (2R)-3-phosphoglycerate + 2 H(+) = D-ribulose 1,5-bisphosphate + CO2 + H2O. It catalyses the reaction D-ribulose 1,5-bisphosphate + O2 = 2-phosphoglycolate + (2R)-3-phosphoglycerate + 2 H(+). Functionally, ruBisCO catalyzes two reactions: the carboxylation of D-ribulose 1,5-bisphosphate, the primary event in carbon dioxide fixation, as well as the oxidative fragmentation of the pentose substrate in the photorespiration process. Both reactions occur simultaneously and in competition at the same active site. The protein is Ribulose bisphosphate carboxylase large chain of Anthoceros angustus (Hornwort).